A 149-amino-acid chain; its full sequence is Nucleoside diphosphate kinase (149 aa).

ATP is bound by residues Lys-9, Phe-57, Arg-85, Thr-91, Arg-102, and Asn-112. The active-site Pros-phosphohistidine intermediate is the His-115.

It belongs to the NDK family. Requires Mg(2+) as cofactor.

It localises to the cytoplasm. The catalysed reaction is a 2'-deoxyribonucleoside 5'-diphosphate + ATP = a 2'-deoxyribonucleoside 5'-triphosphate + ADP. It carries out the reaction a ribonucleoside 5'-diphosphate + ATP = a ribonucleoside 5'-triphosphate + ADP. Its function is as follows. Major role in the synthesis of nucleoside triphosphates other than ATP. The ATP gamma phosphate is transferred to the NDP beta phosphate via a ping-pong mechanism, using a phosphorylated active-site intermediate. In Methanosarcina mazei (strain ATCC BAA-159 / DSM 3647 / Goe1 / Go1 / JCM 11833 / OCM 88) (Methanosarcina frisia), this protein is Nucleoside diphosphate kinase.